We begin with the raw amino-acid sequence, 152 residues long: Large ribosomal subunit protein bL9 (152 aa).

It belongs to the bacterial ribosomal protein bL9 family.

Its function is as follows. Binds to the 23S rRNA. In Gloeothece citriformis (strain PCC 7424) (Cyanothece sp. (strain PCC 7424)), this protein is Large ribosomal subunit protein bL9.